A 153-amino-acid polypeptide reads, in one-letter code: Large ribosomal subunit protein uL15 (153 aa).

The tract at residues 15–42 (ARRIVGRGSSSGRGTTSGRGTKGQQARA) is disordered. A compositionally biased stretch (gly residues) spans 23–35 (SSSGRGTTSGRGT).

This sequence belongs to the universal ribosomal protein uL15 family. As to quaternary structure, part of the 50S ribosomal subunit.

Its function is as follows. Binds to the 23S rRNA. The chain is Large ribosomal subunit protein uL15 from Treponema pallidum (strain Nichols).